The chain runs to 212 residues: Uracil phosphoribosyltransferase (212 aa).

Residues R78, R103, and 130–138 (DPMLATGGS) contribute to the 5-phospho-alpha-D-ribose 1-diphosphate site. Uracil contacts are provided by residues I193 and 198 to 200 (GDA). D199 serves as a coordination point for 5-phospho-alpha-D-ribose 1-diphosphate.

It belongs to the UPRTase family. The cofactor is Mg(2+).

The enzyme catalyses UMP + diphosphate = 5-phospho-alpha-D-ribose 1-diphosphate + uracil. It functions in the pathway pyrimidine metabolism; UMP biosynthesis via salvage pathway; UMP from uracil: step 1/1. With respect to regulation, allosterically activated by GTP. In terms of biological role, catalyzes the conversion of uracil and 5-phospho-alpha-D-ribose 1-diphosphate (PRPP) to UMP and diphosphate. This Pseudomonas putida (strain ATCC 700007 / DSM 6899 / JCM 31910 / BCRC 17059 / LMG 24140 / F1) protein is Uracil phosphoribosyltransferase.